The chain runs to 74 residues: UPF0057 membrane protein At4g30660 (74 aa).

The next 2 helical transmembrane spans lie at 4–24 (NCEI…GVCF) and 37–57 (LVLT…VIVF).

Belongs to the UPF0057 (PMP3) family.

The protein localises to the membrane. This is UPF0057 membrane protein At4g30660 from Arabidopsis thaliana (Mouse-ear cress).